The chain runs to 120 residues: Large ribosomal subunit protein bL19 (120 aa).

Belongs to the bacterial ribosomal protein bL19 family.

This protein is located at the 30S-50S ribosomal subunit interface and may play a role in the structure and function of the aminoacyl-tRNA binding site. The polypeptide is Large ribosomal subunit protein bL19 (Microcystis aeruginosa (strain NIES-843 / IAM M-2473)).